A 200-amino-acid chain; its full sequence is 3-isopropylmalate dehydratase small subunit (200 aa).

The protein belongs to the LeuD family. LeuD type 1 subfamily. Heterodimer of LeuC and LeuD.

It carries out the reaction (2R,3S)-3-isopropylmalate = (2S)-2-isopropylmalate. It functions in the pathway amino-acid biosynthesis; L-leucine biosynthesis; L-leucine from 3-methyl-2-oxobutanoate: step 2/4. Functionally, catalyzes the isomerization between 2-isopropylmalate and 3-isopropylmalate, via the formation of 2-isopropylmaleate. The polypeptide is 3-isopropylmalate dehydratase small subunit (Sodalis glossinidius (strain morsitans)).